Reading from the N-terminus, the 332-residue chain is Malate dehydrogenase (332 aa).

15-21 (GAAGHIG) serves as a coordination point for NAD(+). Substrate is bound by residues Arg-96 and Arg-102. NAD(+) contacts are provided by residues Asn-109 and 133–135 (VGN). Substrate contacts are provided by Asn-135 and Arg-166. The Proton acceptor role is filled by His-191.

Belongs to the LDH/MDH superfamily. MDH type 2 family.

The enzyme catalyses (S)-malate + NAD(+) = oxaloacetate + NADH + H(+). Catalyzes the reversible oxidation of malate to oxaloacetate. The protein is Malate dehydrogenase of Mycolicibacterium vanbaalenii (strain DSM 7251 / JCM 13017 / BCRC 16820 / KCTC 9966 / NRRL B-24157 / PYR-1) (Mycobacterium vanbaalenii).